A 396-amino-acid polypeptide reads, in one-letter code: 1-deoxy-D-xylulose 5-phosphate reductoisomerase (396 aa).

Residues threonine 10, glycine 11, serine 12, isoleucine 13, glutamine 38, and asparagine 124 each coordinate NADPH. Lysine 125 lines the 1-deoxy-D-xylulose 5-phosphate pocket. Residue glutamate 126 coordinates NADPH. Residue aspartate 150 participates in Mn(2+) binding. Positions 151, 152, 179, and 202 each coordinate 1-deoxy-D-xylulose 5-phosphate. Glutamate 152 is a Mn(2+) binding site. Residue glycine 208 participates in NADPH binding. Serine 215, asparagine 220, lysine 221, and glutamate 224 together coordinate 1-deoxy-D-xylulose 5-phosphate. Glutamate 224 contributes to the Mn(2+) binding site.

It belongs to the DXR family. Mg(2+) is required as a cofactor. The cofactor is Mn(2+).

It carries out the reaction 2-C-methyl-D-erythritol 4-phosphate + NADP(+) = 1-deoxy-D-xylulose 5-phosphate + NADPH + H(+). Its pathway is isoprenoid biosynthesis; isopentenyl diphosphate biosynthesis via DXP pathway; isopentenyl diphosphate from 1-deoxy-D-xylulose 5-phosphate: step 1/6. In terms of biological role, catalyzes the NADPH-dependent rearrangement and reduction of 1-deoxy-D-xylulose-5-phosphate (DXP) to 2-C-methyl-D-erythritol 4-phosphate (MEP). In Ralstonia pickettii (strain 12J), this protein is 1-deoxy-D-xylulose 5-phosphate reductoisomerase.